The sequence spans 314 residues: Probable cell division protein WhiA (314 aa).

Positions Ser275–Arg309 form a DNA-binding region, H-T-H motif.

Belongs to the WhiA family.

Involved in cell division and chromosome segregation. This Oceanobacillus iheyensis (strain DSM 14371 / CIP 107618 / JCM 11309 / KCTC 3954 / HTE831) protein is Probable cell division protein WhiA.